The sequence spans 86 residues: Large ribosomal subunit protein bL31 (86 aa).

Residues Cys16, Cys18, Cys38, and Cys41 each coordinate Zn(2+).

Belongs to the bacterial ribosomal protein bL31 family. Type A subfamily. Part of the 50S ribosomal subunit. Requires Zn(2+) as cofactor.

Binds the 23S rRNA. This is Large ribosomal subunit protein bL31 from Acidothermus cellulolyticus (strain ATCC 43068 / DSM 8971 / 11B).